Reading from the N-terminus, the 506-residue chain is NADH-quinone oxidoreductase subunit N (506 aa).

14 helical membrane passes run 14–34, 40–60, 72–92, 109–129, 131–151, 166–186, 209–229, 256–276, 286–306, 314–334, 343–363, 385–405, 420–440, and 465–485; these read MVPE…DLFF, YVAL…ITLY, FVLD…AALI, GEYY…ASSV, FVTL…LVGI, VING…LYGI, LLLA…IATV, MAGF…VSVQ, MSIY…VVAL, LFAY…VALS, FYML…HGLI, AIVM…AGFI, AHYV…VYYF, and IVMS…MIGY.

It belongs to the complex I subunit 2 family. NDH-1 is composed of 14 different subunits. Subunits NuoA, H, J, K, L, M, N constitute the membrane sector of the complex.

It localises to the cell membrane. The catalysed reaction is a quinone + NADH + 5 H(+)(in) = a quinol + NAD(+) + 4 H(+)(out). NDH-1 shuttles electrons from NADH, via FMN and iron-sulfur (Fe-S) centers, to quinones in the respiratory chain. The immediate electron acceptor for the enzyme in this species is believed to be a menaquinone. Couples the redox reaction to proton translocation (for every two electrons transferred, four hydrogen ions are translocated across the cytoplasmic membrane), and thus conserves the redox energy in a proton gradient. This is NADH-quinone oxidoreductase subunit N from Bacillus anthracis.